Here is an 81-residue protein sequence, read N- to C-terminus: Sulfur carrier protein TusA (81 aa).

Residue Cys-19 is the Cysteine persulfide intermediate of the active site.

Belongs to the sulfur carrier protein TusA family. As to quaternary structure, interacts with IscS.

It is found in the cytoplasm. Its pathway is tRNA modification. Its function is as follows. Sulfur carrier protein involved in sulfur trafficking in the cell. Part of a sulfur-relay system required for 2-thiolation during synthesis of 2-thiouridine of the modified wobble base 5-methylaminomethyl-2-thiouridine (mnm(5)s(2)U) in tRNA. Interacts with IscS and stimulates its cysteine desulfurase activity. Accepts an activated sulfur from IscS, which is then transferred to TusD, and thus determines the direction of sulfur flow from IscS to 2-thiouridine formation. Also appears to be involved in sulfur transfer for the biosynthesis of molybdopterin. The sequence is that of Sulfur carrier protein TusA from Shigella boydii serotype 18 (strain CDC 3083-94 / BS512).